Consider the following 137-residue polypeptide: Large ribosomal subunit protein uL16 (137 aa).

Belongs to the universal ribosomal protein uL16 family. Part of the 50S ribosomal subunit.

Its function is as follows. Binds 23S rRNA and is also seen to make contacts with the A and possibly P site tRNAs. This chain is Large ribosomal subunit protein uL16, found in Bartonella bacilliformis (strain ATCC 35685 / KC583 / Herrer 020/F12,63).